The following is a 383-amino-acid chain: 8-amino-7-oxononanoate synthase (383 aa).

Arginine 21 is a binding site for substrate. 108–109 (GF) lines the pyridoxal 5'-phosphate pocket. Histidine 133 serves as a coordination point for substrate. Residues serine 179, histidine 207, and threonine 233 each coordinate pyridoxal 5'-phosphate. At lysine 236 the chain carries N6-(pyridoxal phosphate)lysine. Threonine 350 contributes to the substrate binding site.

The protein belongs to the class-II pyridoxal-phosphate-dependent aminotransferase family. BioF subfamily. As to quaternary structure, homodimer. Pyridoxal 5'-phosphate is required as a cofactor.

The catalysed reaction is 6-carboxyhexanoyl-[ACP] + L-alanine + H(+) = (8S)-8-amino-7-oxononanoate + holo-[ACP] + CO2. The protein operates within cofactor biosynthesis; biotin biosynthesis. Functionally, catalyzes the decarboxylative condensation of pimeloyl-[acyl-carrier protein] and L-alanine to produce 8-amino-7-oxononanoate (AON), [acyl-carrier protein], and carbon dioxide. This is 8-amino-7-oxononanoate synthase from Yersinia enterocolitica serotype O:8 / biotype 1B (strain NCTC 13174 / 8081).